Reading from the N-terminus, the 419-residue chain is MLTSFKLHSLKPYTLKSSMILEIITYILCFFSMIIAFVDNTFSIKIYNITAIVCLLSLILRGRQENYNIKNLILPLSIFLIGLLDLIWYSAFKVDNSPFRATYHSYLNTAKIFIFGSFIVFLTLTSQLKSKKESVLYTLYSLSFLIAGYAMYINSIHENDRISFGVGTATGAAYSTMLIGIVSGVAILYTKKNHPFLFLLNSCAVLYVLALTQTRATLLLFPIICVAALIAYYNKSPKKFTSSIVLLIAILASIVIIFNKPIQNRYNEALNDLNSYTNANSVTSLGARLAMYEIGLNIFIKSPFSFRSAESRAESMNLLVAEHNRLRGALEFSNVHLHNEIIEAGSLKGLMGIFSTLFLYFSLFYIAYKKRALGLLILTLGIVGIGLSDVIIWARSIPIIIISAIVLLLVINNRNNTIN.

Residues 1 to 19 are Cytoplasmic-facing; it reads MLTSFKLHSLKPYTLKSSM. Residues 20–38 traverse the membrane as a helical segment; that stretch reads ILEIITYILCFFSMIIAFV. Residues 39 to 43 lie on the Periplasmic side of the membrane; the sequence is DNTFS. Residues 44 to 61 traverse the membrane as a helical segment; sequence IKIYNITAIVCLLSLILR. At 62 to 71 the chain is on the cytoplasmic side; it reads GRQENYNIKN. The chain crosses the membrane as a helical span at residues 72-91; sequence LILPLSIFLIGLLDLIWYSA. Topologically, residues 92 to 107 are periplasmic; sequence FKVDNSPFRATYHSYL. The chain crosses the membrane as a helical span at residues 108–125; the sequence is NTAKIFIFGSFIVFLTLT. Topologically, residues 126 to 134 are cytoplasmic; the sequence is SQLKSKKES. The chain crosses the membrane as a helical span at residues 135 to 153; that stretch reads VLYTLYSLSFLIAGYAMYI. Over 154-167 the chain is Periplasmic; sequence NSIHENDRISFGVG. The helical transmembrane segment at 168–187 threads the bilayer; the sequence is TATGAAYSTMLIGIVSGVAI. At 188 to 194 the chain is on the cytoplasmic side; the sequence is LYTKKNH. A helical transmembrane segment spans residues 195 to 211; that stretch reads PFLFLLNSCAVLYVLAL. Topologically, residues 212–216 are periplasmic; it reads TQTRA. The chain crosses the membrane as a helical span at residues 217 to 234; it reads TLLLFPIICVAALIAYYN. Residues 235-240 are Cytoplasmic-facing; it reads KSPKKF. A helical transmembrane segment spans residues 241-259; the sequence is TSSIVLLIAILASIVIIFN. Over 260–348 the chain is Periplasmic; it reads KPIQNRYNEA…NEIIEAGSLK (89 aa). A helical membrane pass occupies residues 349–367; sequence GLMGIFSTLFLYFSLFYIA. Topologically, residues 368 to 372 are cytoplasmic; that stretch reads YKKRA. Residues 373–391 form a helical membrane-spanning segment; it reads LGLLILTLGIVGIGLSDVI. At 392 to 396 the chain is on the periplasmic side; it reads IWARS. The helical transmembrane segment at 397 to 412 threads the bilayer; it reads IPIIIISAIVLLLVIN. Residues 413 to 419 lie on the Cytoplasmic side of the membrane; sequence NRNNTIN.

Homodimer.

It localises to the cell inner membrane. It carries out the reaction a lipid-linked O antigen + a lipid A-core oligosaccharide = a lipopolysaccharide + a polyisoprenyl diphosphate.. Its pathway is bacterial outer membrane biogenesis; lipopolysaccharide biosynthesis. Its activity is regulated as follows. Activity does not require ATP and magnesium ions. Transferase involved in the biosynthesis of the lipopolysaccharide (LPS). In vitro, catalyzes the transfer of a polymerized O-antigen molecule from its polyprenyl diphosphate membrane anchor to a terminal sugar of the lipid A-core oligosaccharide, finalizing the biosynthesis of the lipopolysaccharide. The enzyme is functional and can be used to give diverse hybrid O-antigens in vitro, but K12 strains do not produce the O-antigen in vivo due to mutations in the rfb gene cluster. K12 strains are phenotypically rough, their lipopolysaccharide having a complete core structure, but no O-antigen. In highly mucoid K12 strains, WaaL can ligate colanic acid (CA or M-antigen) repeats to a significant proportion of lipopolysaccharide (LPS) core acceptor molecules, forming the LPS glycoform M(LPS). The attachment point was identified as O-7 of the L-glycero-D-manno-heptose of the outer LPS core, the same position used for O-antigen ligation. Cannot catalyze ATP hydrolysis in vitro. This chain is O-antigen ligase, found in Escherichia coli (strain K12).